We begin with the raw amino-acid sequence, 365 residues long: Pyruvate dehydrogenase E1 component subunit beta, mitochondrial (365 aa).

A mitochondrion-targeting transit peptide spans 1–24; it reads MLRTRLIQAASSAQRAFSTSQKAL. Residue Glu85 participates in thiamine diphosphate binding. Positions 138, 186, 187, and 189 each coordinate K(+).

Thiamine diphosphate serves as cofactor. Expressed in salivary glands (at protein level).

It localises to the mitochondrion matrix. The enzyme catalyses N(6)-[(R)-lipoyl]-L-lysyl-[protein] + pyruvate + H(+) = N(6)-[(R)-S(8)-acetyldihydrolipoyl]-L-lysyl-[protein] + CO2. In terms of biological role, the pyruvate dehydrogenase complex catalyzes the overall conversion of pyruvate to acetyl-CoA and CO(2). Might play a role in regulating synapse structure formation at neuromuscular junctions. Might play a role in maintenance of mitochondrial morphology. The protein is Pyruvate dehydrogenase E1 component subunit beta, mitochondrial of Drosophila melanogaster (Fruit fly).